A 536-amino-acid chain; its full sequence is Protoporphyrinogen oxidase, chloroplastic (536 aa).

Residues 1–36 constitute a chloroplast transit peptide; sequence MAAAAAAMATATSATAAPPLRIRDAARRTRRRGHVR. FAD is bound by residues 62 to 67, 87 to 88, and 111 to 114; these read GGGISG, EA, and GPNS. A disordered region spans residues 248–272; sequence TIKTIQERGKNPKPPRDPRLPTPKG. Basic and acidic residues predominate over residues 252–266; it reads IQERGKNPKPPRDPR. 510-512 is an FAD binding site; the sequence is VAL.

Belongs to the protoporphyrinogen/coproporphyrinogen oxidase family. Protoporphyrinogen oxidase subfamily. FAD is required as a cofactor.

It localises to the plastid. The protein localises to the chloroplast. The enzyme catalyses protoporphyrinogen IX + 3 O2 = protoporphyrin IX + 3 H2O2. It functions in the pathway porphyrin-containing compound metabolism; protoporphyrin-IX biosynthesis; protoporphyrin-IX from protoporphyrinogen-IX: step 1/1. The protein operates within porphyrin-containing compound metabolism; chlorophyll biosynthesis. Catalyzes the 6-electron oxidation of protoporphyrinogen-IX to form protoporphyrin-IX. The sequence is that of Protoporphyrinogen oxidase, chloroplastic (PPOX1) from Oryza sativa subsp. japonica (Rice).